A 240-amino-acid chain; its full sequence is Transcriptional regulatory protein BaeR (240 aa).

One can recognise a Response regulatory domain in the interval 12-125 (RILIVEDEPK…EVVARVKTIL (114 aa)). 4-aspartylphosphate is present on D61. Positions 131–234 (QRELQQQDAE…VYGVGYRWEA (104 aa)) form a DNA-binding region, ompR/PhoB-type.

Post-translationally, phosphorylated by BaeS.

The protein localises to the cytoplasm. In terms of biological role, member of the two-component regulatory system BaeS/BaeR. Activates the mdtABCD operon. The sequence is that of Transcriptional regulatory protein BaeR (baeR) from Escherichia coli O6:H1 (strain CFT073 / ATCC 700928 / UPEC).